Reading from the N-terminus, the 134-residue chain is Large ribosomal subunit protein uL16c (134 aa).

The protein belongs to the universal ribosomal protein uL16 family. Part of the 50S ribosomal subunit.

The protein localises to the plastid. It localises to the chloroplast. The protein is Large ribosomal subunit protein uL16c of Nephroselmis olivacea (Green alga).